A 182-amino-acid polypeptide reads, in one-letter code: UPF0397 protein BT9727_2423 (182 aa).

5 helical membrane passes run 9–29 (VVAI…GFSI), 40–60 (AILT…IGLI), 71–91 (WGIW…MGFI), 114–134 (ITGL…DIIV), and 142–162 (IVIQ…VLGL).

It belongs to the UPF0397 family.

It localises to the cell membrane. The chain is UPF0397 protein BT9727_2423 from Bacillus thuringiensis subsp. konkukian (strain 97-27).